A 346-amino-acid chain; its full sequence is Phosphoribosylformylglycinamidine cyclo-ligase (346 aa).

This sequence belongs to the AIR synthase family.

It is found in the cytoplasm. The enzyme catalyses 2-formamido-N(1)-(5-O-phospho-beta-D-ribosyl)acetamidine + ATP = 5-amino-1-(5-phospho-beta-D-ribosyl)imidazole + ADP + phosphate + H(+). Its pathway is purine metabolism; IMP biosynthesis via de novo pathway; 5-amino-1-(5-phospho-D-ribosyl)imidazole from N(2)-formyl-N(1)-(5-phospho-D-ribosyl)glycinamide: step 2/2. This chain is Phosphoribosylformylglycinamidine cyclo-ligase, found in Bacillus mycoides (strain KBAB4) (Bacillus weihenstephanensis).